We begin with the raw amino-acid sequence, 201 residues long: Probable chemoreceptor glutamine deamidase CheD 1 (201 aa).

This sequence belongs to the CheD family.

It carries out the reaction L-glutaminyl-[protein] + H2O = L-glutamyl-[protein] + NH4(+). In terms of biological role, probably deamidates glutamine residues to glutamate on methyl-accepting chemotaxis receptors (MCPs), playing an important role in chemotaxis. This is Probable chemoreceptor glutamine deamidase CheD 1 from Dechloromonas aromatica (strain RCB).